We begin with the raw amino-acid sequence, 561 residues long: Dihydroxy-acid dehydratase (561 aa).

C50 lines the [2Fe-2S] cluster pocket. Residue D82 coordinates Mg(2+). A [2Fe-2S] cluster-binding site is contributed by C123. Mg(2+)-binding residues include D124 and K125. K125 is subject to N6-carboxylysine. [2Fe-2S] cluster is bound at residue C195. Position 447 (E447) interacts with Mg(2+). The active-site Proton acceptor is the S473.

Belongs to the IlvD/Edd family. Homodimer. [2Fe-2S] cluster serves as cofactor. Requires Mg(2+) as cofactor.

It carries out the reaction (2R)-2,3-dihydroxy-3-methylbutanoate = 3-methyl-2-oxobutanoate + H2O. It catalyses the reaction (2R,3R)-2,3-dihydroxy-3-methylpentanoate = (S)-3-methyl-2-oxopentanoate + H2O. It functions in the pathway amino-acid biosynthesis; L-isoleucine biosynthesis; L-isoleucine from 2-oxobutanoate: step 3/4. It participates in amino-acid biosynthesis; L-valine biosynthesis; L-valine from pyruvate: step 3/4. Functions in the biosynthesis of branched-chain amino acids. Catalyzes the dehydration of (2R,3R)-2,3-dihydroxy-3-methylpentanoate (2,3-dihydroxy-3-methylvalerate) into 2-oxo-3-methylpentanoate (2-oxo-3-methylvalerate) and of (2R)-2,3-dihydroxy-3-methylbutanoate (2,3-dihydroxyisovalerate) into 2-oxo-3-methylbutanoate (2-oxoisovalerate), the penultimate precursor to L-isoleucine and L-valine, respectively. This Chloroflexus aurantiacus (strain ATCC 29366 / DSM 635 / J-10-fl) protein is Dihydroxy-acid dehydratase.